The chain runs to 67 residues: Large ribosomal subunit protein bL35 (67 aa).

Residues M1–G20 are disordered.

The protein belongs to the bacterial ribosomal protein bL35 family.

This is Large ribosomal subunit protein bL35 from Anaeromyxobacter dehalogenans (strain 2CP-1 / ATCC BAA-258).